Reading from the N-terminus, the 602-residue chain is Elongation factor 4 (602 aa).

The tr-type G domain maps to 6–188 (DHIRNFSIVA…AIVTQLPAPK (183 aa)). Residues 18-23 (DHGKST) and 135-138 (NKID) contribute to the GTP site.

Belongs to the TRAFAC class translation factor GTPase superfamily. Classic translation factor GTPase family. LepA subfamily.

It localises to the cell inner membrane. The enzyme catalyses GTP + H2O = GDP + phosphate + H(+). In terms of biological role, required for accurate and efficient protein synthesis under certain stress conditions. May act as a fidelity factor of the translation reaction, by catalyzing a one-codon backward translocation of tRNAs on improperly translocated ribosomes. Back-translocation proceeds from a post-translocation (POST) complex to a pre-translocation (PRE) complex, thus giving elongation factor G a second chance to translocate the tRNAs correctly. Binds to ribosomes in a GTP-dependent manner. The sequence is that of Elongation factor 4 from Brucella anthropi (strain ATCC 49188 / DSM 6882 / CCUG 24695 / JCM 21032 / LMG 3331 / NBRC 15819 / NCTC 12168 / Alc 37) (Ochrobactrum anthropi).